Reading from the N-terminus, the 237-residue chain is Uridylate kinase (237 aa).

10–13 (KFSG) is a binding site for ATP. Positions 18-23 (GDSGFG) are involved in allosteric activation by GTP. Gly-52 provides a ligand contact to UMP. ATP is bound by residues Gly-53 and Arg-57. UMP contacts are provided by residues Asp-73 and 134 to 141 (TGNPFFTT). The ATP site is built by Thr-161, Tyr-167, and Asp-170.

Belongs to the UMP kinase family. Homohexamer.

The protein localises to the cytoplasm. The catalysed reaction is UMP + ATP = UDP + ADP. It participates in pyrimidine metabolism; CTP biosynthesis via de novo pathway; UDP from UMP (UMPK route): step 1/1. With respect to regulation, allosterically activated by GTP. Inhibited by UTP. In terms of biological role, catalyzes the reversible phosphorylation of UMP to UDP. The protein is Uridylate kinase of Campylobacter hominis (strain ATCC BAA-381 / DSM 21671 / CCUG 45161 / LMG 19568 / NCTC 13146 / CH001A).